A 142-amino-acid polypeptide reads, in one-letter code: Transcriptional regulator MraZ (142 aa).

SpoVT-AbrB domains lie at 5-48 (EFEY…PLCE) and 77-120 (AFDV…DKET).

The protein belongs to the MraZ family. Forms oligomers.

It is found in the cytoplasm. It localises to the nucleoid. The protein is Transcriptional regulator MraZ of Dehalococcoides mccartyi (strain ATCC BAA-2266 / KCTC 15142 / 195) (Dehalococcoides ethenogenes (strain 195)).